The chain runs to 703 residues: Bifunctional arginine dihydrolase/ornithine cyclodeaminase AgrE (703 aa).

The interval 10–269 (CPPDHYDVDY…GAAKCLTLRV (260 aa)) is arginine dihydrolase. Residues asparagine 22, aspartate 65, asparagine 71, arginine 90, and arginine 139 each contribute to the L-arginine site. Position 22 (asparagine 22) interacts with L-ornithine. Residues arginine 90, arginine 139, and histidine 168 each contribute to the L-ornithine site. Catalysis depends on histidine 168, which acts as the Proton donor/acceptor. The L-arginine site is built by aspartate 170 and alanine 258. Residue cysteine 264 coordinates L-ornithine. Cysteine 264 acts as the Nucleophile in catalysis. Positions 285-694 (SRIIRIEGHL…SLLTQQLDKL (410 aa)) are ornithine cyclodeaminase. Residues asparagine 524, alanine 525, aspartate 603, serine 635, methionine 636, leucine 637, histidine 638, aspartate 656, aspartate 679, and valine 680 each contribute to the NAD(+) site.

This sequence in the N-terminal section; belongs to the DDAH family. In the C-terminal section; belongs to the AgrE/ArgZ ornithine cyclodeaminase family. In terms of assembly, homotetramer. The cofactor is NAD(+).

It catalyses the reaction L-arginine + 2 H2O + 2 H(+) = L-ornithine + 2 NH4(+) + CO2. The enzyme catalyses L-ornithine = L-proline + NH4(+). Ornithine cyclodeaminase activity is inhibited by ATP. Its function is as follows. Bifunctional enzyme involved in a cyanobacterial arginine utilization pathway that produces glutamate and enables cellular adaptation to nitrogen fluctuations. Catalyzes the hydrolysis of arginine to ornithine, with the release of ammonia and carbon dioxide. Then, catalyzes the conversion of ornithine to proline, with the release of ammonia. The polypeptide is Bifunctional arginine dihydrolase/ornithine cyclodeaminase AgrE (Nostoc sp. (strain PCC 7120 / SAG 25.82 / UTEX 2576)).